We begin with the raw amino-acid sequence, 432 residues long: Serine--tRNA ligase (432 aa).

235–237 is a binding site for L-serine; that stretch reads TSE. 266-268 is an ATP binding site; the sequence is RSE. Glu289 is a binding site for L-serine. 353 to 356 provides a ligand contact to ATP; sequence EISS. An L-serine-binding site is contributed by Ser388.

The protein belongs to the class-II aminoacyl-tRNA synthetase family. Type-1 seryl-tRNA synthetase subfamily. In terms of assembly, homodimer. The tRNA molecule binds across the dimer.

It is found in the cytoplasm. The enzyme catalyses tRNA(Ser) + L-serine + ATP = L-seryl-tRNA(Ser) + AMP + diphosphate + H(+). It catalyses the reaction tRNA(Sec) + L-serine + ATP = L-seryl-tRNA(Sec) + AMP + diphosphate + H(+). The protein operates within aminoacyl-tRNA biosynthesis; selenocysteinyl-tRNA(Sec) biosynthesis; L-seryl-tRNA(Sec) from L-serine and tRNA(Sec): step 1/1. Its function is as follows. Catalyzes the attachment of serine to tRNA(Ser). Is also able to aminoacylate tRNA(Sec) with serine, to form the misacylated tRNA L-seryl-tRNA(Sec), which will be further converted into selenocysteinyl-tRNA(Sec). The sequence is that of Serine--tRNA ligase from Paraburkholderia phymatum (strain DSM 17167 / CIP 108236 / LMG 21445 / STM815) (Burkholderia phymatum).